Consider the following 317-residue polypeptide: Lipoyl synthase (317 aa).

Positions 1–22 (MVTVVNTLNRPRHPEKQNRPET) are disordered. A compositionally biased stretch (basic and acidic residues) spans 12 to 22 (RHPEKQNRPET). 7 residues coordinate [4Fe-4S] cluster: Cys-57, Cys-62, Cys-68, Cys-83, Cys-87, Cys-90, and Ser-296. The 217-residue stretch at 69–285 (WEKKHATFMI…ETVAYAKGFL (217 aa)) folds into the Radical SAM core domain.

Belongs to the radical SAM superfamily. Lipoyl synthase family. [4Fe-4S] cluster is required as a cofactor.

The protein resides in the cytoplasm. It catalyses the reaction [[Fe-S] cluster scaffold protein carrying a second [4Fe-4S](2+) cluster] + N(6)-octanoyl-L-lysyl-[protein] + 2 oxidized [2Fe-2S]-[ferredoxin] + 2 S-adenosyl-L-methionine + 4 H(+) = [[Fe-S] cluster scaffold protein] + N(6)-[(R)-dihydrolipoyl]-L-lysyl-[protein] + 4 Fe(3+) + 2 hydrogen sulfide + 2 5'-deoxyadenosine + 2 L-methionine + 2 reduced [2Fe-2S]-[ferredoxin]. Its pathway is protein modification; protein lipoylation via endogenous pathway; protein N(6)-(lipoyl)lysine from octanoyl-[acyl-carrier-protein]: step 2/2. In terms of biological role, catalyzes the radical-mediated insertion of two sulfur atoms into the C-6 and C-8 positions of the octanoyl moiety bound to the lipoyl domains of lipoate-dependent enzymes, thereby converting the octanoylated domains into lipoylated derivatives. The protein is Lipoyl synthase of Azorhizobium caulinodans (strain ATCC 43989 / DSM 5975 / JCM 20966 / LMG 6465 / NBRC 14845 / NCIMB 13405 / ORS 571).